The chain runs to 275 residues: Shikimate dehydrogenase (NADP(+)) (275 aa).

Residues 16 to 18 (SKS) and Thr-63 each bind shikimate. The Proton acceptor role is filled by Lys-67. Shikimate contacts are provided by Asn-88 and Asp-104. NADP(+) contacts are provided by residues 129–133 (GAGGA), 153–158 (NRTVAR), and Met-219. Tyr-221 contacts shikimate. Gly-243 contacts NADP(+).

The protein belongs to the shikimate dehydrogenase family. Homodimer.

The enzyme catalyses shikimate + NADP(+) = 3-dehydroshikimate + NADPH + H(+). It functions in the pathway metabolic intermediate biosynthesis; chorismate biosynthesis; chorismate from D-erythrose 4-phosphate and phosphoenolpyruvate: step 4/7. Its function is as follows. Involved in the biosynthesis of the chorismate, which leads to the biosynthesis of aromatic amino acids. Catalyzes the reversible NADPH linked reduction of 3-dehydroshikimate (DHSA) to yield shikimate (SA). This Marinobacter nauticus (strain ATCC 700491 / DSM 11845 / VT8) (Marinobacter aquaeolei) protein is Shikimate dehydrogenase (NADP(+)).